A 248-amino-acid chain; its full sequence is Triosephosphate isomerase (248 aa).

9 to 11 provides a ligand contact to substrate; the sequence is NWK. The Electrophile role is filled by His-94. Residue Glu-166 is the Proton acceptor of the active site. Residues Gly-172, Ser-212, and 233–234 contribute to the substrate site; that span reads GG.

The protein belongs to the triosephosphate isomerase family. As to quaternary structure, homodimer.

It localises to the cytoplasm. The catalysed reaction is D-glyceraldehyde 3-phosphate = dihydroxyacetone phosphate. It functions in the pathway carbohydrate biosynthesis; gluconeogenesis. It participates in carbohydrate degradation; glycolysis; D-glyceraldehyde 3-phosphate from glycerone phosphate: step 1/1. In terms of biological role, involved in the gluconeogenesis. Catalyzes stereospecifically the conversion of dihydroxyacetone phosphate (DHAP) to D-glyceraldehyde-3-phosphate (G3P). This is Triosephosphate isomerase from Clostridium botulinum (strain Langeland / NCTC 10281 / Type F).